Here is a 296-residue protein sequence, read N- to C-terminus: Cytidine deaminase (296 aa).

CMP/dCMP-type deaminase domains are found at residues 47–167 and 186–296; these read AESE…FGPS and DSSD…LDPE. 88 to 90 contacts substrate; sequence NME. Histidine 101 lines the Zn(2+) pocket. Glutamate 103 acts as the Proton donor in catalysis. Zn(2+)-binding residues include cysteine 128 and cysteine 131.

It belongs to the cytidine and deoxycytidylate deaminase family. In terms of assembly, homodimer. It depends on Zn(2+) as a cofactor.

It carries out the reaction cytidine + H2O + H(+) = uridine + NH4(+). The catalysed reaction is 2'-deoxycytidine + H2O + H(+) = 2'-deoxyuridine + NH4(+). In terms of biological role, this enzyme scavenges exogenous and endogenous cytidine and 2'-deoxycytidine for UMP synthesis. This Shewanella sediminis (strain HAW-EB3) protein is Cytidine deaminase.